The primary structure comprises 420 residues: MSQPQMSPEKEQELASKILHRAELAQMTRQLKLGLSNVPSTKRKQDSTTKKRSGEDAEDVDEDHKTLLEAISPAKKPLHDDTNKMTVISPVKFVEKPNTPPSSRQRKAEDRSQQIKPRKEDTPSTPRASATPIILPHASSHYQRPHDKNFMTPKRNNNNSSNHSNNNNNIKKKAAGSKDAPQDSDNTAGADLLMYLATSPYNKSSHHGTPMAVRMPTTPRSYHYASQLSLNGNTASTSNDAVRFSHIKPSASSPQSTFKSNLLPNFPDESLMDSPSLYLSNNNGSVQATLSPQQRRKPTTNTLHPPSNVPTTPSRELNGTNFNLLRTPNFNMGDYLHNLFSPSPRVPAQQGASNTSASIPSVPAMVPGSSSNTSAIATAAISSHTTNNFLDMNANGIPLIVGPGTDRIGEGESIDDKLTD.

S2 is modified (N-acetylserine). Residues 2–70 (SQPQMSPEKE…DEDHKTLLEA (69 aa)) form an interaction with SWI6 region. The residue at position 7 (S7) is a Phosphoserine. Disordered regions lie at residues 30–187 (QLKL…SDNT) and 273–319 (DSPS…ELNG). Over residues 43–55 (RKQDSTTKKRSGE) the composition is skewed to basic and acidic residues. S72 carries the phosphoserine modification. A Phosphothreonine modification is found at T99. Position 102 is a phosphoserine (S102). Positions 106–122 (RKAEDRSQQIKPRKEDT) are enriched in basic and acidic residues. The segment covering 156 to 169 (NNNNSSNHSNNNNN) has biased composition (low complexity). The segment covering 277–319 (LYLSNNNGSVQATLSPQQRRKPTTNTLHPPSNVPTTPSRELNG) has biased composition (polar residues). The residue at position 419 (T419) is a Phosphothreonine.

In terms of assembly, interacts with the ANK repeats of SWI6. The interaction with SWI6 is required for function. Interacts with SIN3. Phosphorylated by CDC28 in a cell cycle-dependent manner, inhibiting the interaction with SWI6.

It is found in the cytoplasm. Its subcellular location is the nucleus. In terms of biological role, involved in the regulation and timing of MBF-dependent transcription in late G1 of the cell cycle. This Saccharomyces cerevisiae (strain ATCC 204508 / S288c) (Baker's yeast) protein is Protein STB1 (STB1).